The chain runs to 863 residues: Leucine--tRNA ligase (863 aa).

The 'HIGH' region signature appears at 40–51 (PYPSGAGLHVGH). Positions 635–639 (KMSKS) match the 'KMSKS' region motif. Lys638 contacts ATP.

It belongs to the class-I aminoacyl-tRNA synthetase family.

Its subcellular location is the cytoplasm. It carries out the reaction tRNA(Leu) + L-leucine + ATP = L-leucyl-tRNA(Leu) + AMP + diphosphate. The sequence is that of Leucine--tRNA ligase from Leptospira interrogans serogroup Icterohaemorrhagiae serovar Lai (strain 56601).